We begin with the raw amino-acid sequence, 291 residues long: Nucleotide-binding protein Cthe_0113 (291 aa).

Residue Gly-8 to Ser-15 participates in ATP binding. Asp-59–Gly-62 is a binding site for GTP.

It belongs to the RapZ-like family.

Displays ATPase and GTPase activities. This is Nucleotide-binding protein Cthe_0113 from Acetivibrio thermocellus (strain ATCC 27405 / DSM 1237 / JCM 9322 / NBRC 103400 / NCIMB 10682 / NRRL B-4536 / VPI 7372) (Clostridium thermocellum).